The primary structure comprises 256 residues: Type III pantothenate kinase (256 aa).

Residue 6–13 (DIGNTHTV) participates in ATP binding. Substrate contacts are provided by residues Y100 and 107–110 (GADR). The active-site Proton acceptor is the D109. K(+) is bound at residue D129. T132 contacts ATP. Substrate is bound at residue T184.

Belongs to the type III pantothenate kinase family. In terms of assembly, homodimer. It depends on NH4(+) as a cofactor. K(+) serves as cofactor.

The protein resides in the cytoplasm. The enzyme catalyses (R)-pantothenate + ATP = (R)-4'-phosphopantothenate + ADP + H(+). Its pathway is cofactor biosynthesis; coenzyme A biosynthesis; CoA from (R)-pantothenate: step 1/5. Catalyzes the phosphorylation of pantothenate (Pan), the first step in CoA biosynthesis. The chain is Type III pantothenate kinase from Acidothermus cellulolyticus (strain ATCC 43068 / DSM 8971 / 11B).